The sequence spans 329 residues: Adenylate isopentenyltransferase (329 aa).

Residues 37 to 44, Lys-63, Thr-74, 129 to 131, 220 to 222, and Lys-313 each bind ATP; these read GATGTGKS, SNS, and KAI.

The protein belongs to the IPP transferase family. Requires Mg(2+) as cofactor. As to expression, expressed in roots, stems, leaves and cones.

It catalyses the reaction dimethylallyl diphosphate + AMP = N(6)-(dimethylallyl)adenosine 5'-phosphate + diphosphate. The catalysed reaction is dimethylallyl diphosphate + ADP = N(6)-(dimethylallyl)adenosine 5'-diphosphate + diphosphate. The enzyme catalyses dimethylallyl diphosphate + ATP = N(6)-(dimethylallyl)adenosine 5'-triphosphate + diphosphate. Its function is as follows. Involved in cytokinin biosynthesis. Catalyzes the transfer of an isopentenyl group from dimethylallyl diphosphate (DMAPP) to ATP, ADP and AMP. GMP, IMP, CMP or UMP are not used as substrates. This chain is Adenylate isopentenyltransferase, found in Humulus lupulus (European hop).